The primary structure comprises 291 residues: Protein/nucleic acid deglycase HchA (291 aa).

Residues 1–18 are compositionally biased toward basic and acidic residues; it reads MSNERDTSRTPTPDHAEH. A disordered region spans residues 1–20; the sequence is MSNERDTSRTPTPDHAEHNA. Catalysis depends on Cys-188, which acts as the Nucleophile.

It belongs to the peptidase C56 family. HchA subfamily.

The protein resides in the cytoplasm. The catalysed reaction is N(omega)-(1-hydroxy-2-oxopropyl)-L-arginyl-[protein] + H2O = lactate + L-arginyl-[protein] + H(+). It catalyses the reaction N(6)-(1-hydroxy-2-oxopropyl)-L-lysyl-[protein] + H2O = lactate + L-lysyl-[protein] + H(+). It carries out the reaction S-(1-hydroxy-2-oxopropyl)-L-cysteinyl-[protein] + H2O = lactate + L-cysteinyl-[protein] + H(+). The enzyme catalyses N(omega)-(1-hydroxy-2-oxoethyl)-L-arginyl-[protein] + H2O = L-arginyl-[protein] + glycolate + H(+). The catalysed reaction is N(6)-(1-hydroxy-2-oxoethyl)-L-lysyl-[protein] + H2O = glycolate + L-lysyl-[protein] + H(+). It catalyses the reaction S-(1-hydroxy-2-oxoethyl)-L-cysteinyl-[protein] + H2O = glycolate + L-cysteinyl-[protein] + H(+). It carries out the reaction N(2)-(1-hydroxy-2-oxopropyl)-dGTP + H2O = lactate + dGTP + H(+). The enzyme catalyses N(2)-(1-hydroxy-2-oxopropyl)-GTP + H2O = lactate + GTP + H(+). The catalysed reaction is N(2)-(1-hydroxy-2-oxopropyl)-GDP + H2O = lactate + GDP + H(+). It catalyses the reaction N(2)-(1-hydroxy-2-oxopropyl)-GMP + H2O = lactate + GMP + H(+). It carries out the reaction N(2)-(1-hydroxy-2-oxoethyl)-dGTP + H2O = dGTP + glycolate + H(+). The enzyme catalyses N(2)-(1-hydroxy-2-oxoethyl)-GTP + H2O = glycolate + GTP + H(+). The catalysed reaction is N(2)-(1-hydroxy-2-oxoethyl)-GDP + H2O = glycolate + GDP + H(+). It catalyses the reaction N(2)-(1-hydroxy-2-oxoethyl)-GMP + H2O = glycolate + GMP + H(+). It carries out the reaction an N(2)-(1-hydroxy-2-oxopropyl)-guanosine in RNA + H2O = a guanosine in RNA + lactate + H(+). The enzyme catalyses an N(2)-(1-hydroxy-2-oxopropyl)-2'-deoxyguanosine in DNA + H2O = a 2'-deoxyguanosine in DNA + lactate + H(+). The catalysed reaction is an N(2)-(1-hydroxy-2-oxoethyl)-guanosine in RNA + H2O = a guanosine in RNA + glycolate + H(+). It catalyses the reaction an N(2)-(1-hydroxy-2-oxoethyl)-2'-deoxyguanosine in DNA + H2O = a 2'-deoxyguanosine in DNA + glycolate + H(+). Functionally, protein and nucleotide deglycase that catalyzes the deglycation of the Maillard adducts formed between amino groups of proteins or nucleotides and reactive carbonyl groups of glyoxals. Thus, functions as a protein deglycase that repairs methylglyoxal- and glyoxal-glycated proteins, and releases repaired proteins and lactate or glycolate, respectively. Deglycates cysteine, arginine and lysine residues in proteins, and thus reactivates these proteins by reversing glycation by glyoxals. Acts on early glycation intermediates (hemithioacetals and aminocarbinols), preventing the formation of Schiff bases and advanced glycation endproducts (AGE). Also functions as a nucleotide deglycase able to repair glycated guanine in the free nucleotide pool (GTP, GDP, GMP, dGTP) and in DNA and RNA. Is thus involved in a major nucleotide repair system named guanine glycation repair (GG repair), dedicated to reversing methylglyoxal and glyoxal damage via nucleotide sanitization and direct nucleic acid repair. Plays an important role in protecting cells from carbonyl stress. This chain is Protein/nucleic acid deglycase HchA, found in Pseudomonas aeruginosa (strain LESB58).